Consider the following 432-residue polypeptide: Ectonucleoside triphosphate diphosphohydrolase 5 (432 aa).

The signal sequence occupies residues 1-24; the sequence is MALYQGAAFFMLVASCVCSTVFHR. E175 functions as the Proton acceptor in the catalytic mechanism. An N-linked (GlcNAc...) asparagine glycan is attached at N235. 2 disulfides stabilise this stretch: C275-C307 and C367-C381. N-linked (GlcNAc...) asparagine glycosylation is present at N372.

The protein belongs to the GDA1/CD39 NTPase family. Monomer; active form. Homodimer; disulfide-linked. Homodimers are enzymatically inactive. Ca(2+) is required as a cofactor. Requires Mg(2+) as cofactor. In terms of processing, N-glycosylated; high-mannose type.

The protein localises to the endoplasmic reticulum. It is found in the secreted. The catalysed reaction is a ribonucleoside 5'-diphosphate + H2O = a ribonucleoside 5'-phosphate + phosphate + H(+). It carries out the reaction GDP + H2O = GMP + phosphate + H(+). The enzyme catalyses UDP + H2O = UMP + phosphate + H(+). It catalyses the reaction IDP + H2O = IMP + phosphate + H(+). The catalysed reaction is CDP + H2O = CMP + phosphate + H(+). It carries out the reaction ADP + H2O = AMP + phosphate + H(+). Its pathway is protein modification; protein glycosylation. In terms of biological role, hydrolyzes nucleoside diphosphates with a preference for GDP, IDP and UDP compared to ADP and CDP. In the lumen of the endoplasmic reticulum, hydrolyzes UDP that acts as an end-product feedback inhibitor of the UDP-Glc:glycoprotein glucosyltransferases. UMP can be transported back by an UDP-sugar antiporter to the cytosol where it is consumed to regenerate UDP-glucose. Therefore, it positively regulates protein reglucosylation by clearing UDP from the ER lumen and by promoting the regeneration of UDP-glucose. Protein reglucosylation is essential to proper glycoprotein folding and quality control in the ER. This Bos taurus (Bovine) protein is Ectonucleoside triphosphate diphosphohydrolase 5 (ENTPD5).